Reading from the N-terminus, the 253-residue chain is Triosephosphate isomerase (253 aa).

N9–K11 contacts substrate. The active-site Electrophile is the H95. Residue E167 is the Proton acceptor of the active site. Residues G173, S213, and G234 to G235 contribute to the substrate site. A Phosphoserine modification is found at S213.

The protein belongs to the triosephosphate isomerase family. In terms of assembly, homodimer.

Its subcellular location is the cytoplasm. The enzyme catalyses D-glyceraldehyde 3-phosphate = dihydroxyacetone phosphate. The protein operates within carbohydrate biosynthesis; gluconeogenesis. It functions in the pathway carbohydrate degradation; glycolysis; D-glyceraldehyde 3-phosphate from glycerone phosphate: step 1/1. Its function is as follows. Involved in the gluconeogenesis. Catalyzes stereospecifically the conversion of dihydroxyacetone phosphate (DHAP) to D-glyceraldehyde-3-phosphate (G3P). The polypeptide is Triosephosphate isomerase (Bacillus licheniformis (strain ATCC 14580 / DSM 13 / JCM 2505 / CCUG 7422 / NBRC 12200 / NCIMB 9375 / NCTC 10341 / NRRL NRS-1264 / Gibson 46)).